A 363-amino-acid polypeptide reads, in one-letter code: Peroxisomal (S)-2-hydroxyacid oxidase GLO4 (363 aa).

Positions 1 to 357 constitute an FMN hydroxy acid dehydrogenase domain; the sequence is MDQIVNVDEF…TRNHVRTENE (357 aa). FMN-binding positions include 78–80, Ser-107, 128–130, and Thr-156; these read PTA and QIY. Residue Tyr-130 coordinates a 2-oxocarboxylate. Arg-165 contacts a 2-oxocarboxylate. Residues Lys-228 and Ser-250 each coordinate FMN. His-252 acts as the Proton acceptor in catalysis. Arg-255 is an a 2-oxocarboxylate binding site. FMN-binding positions include 283 to 287 and 306 to 307; these read DGGVR and GR. Residues 361-363 carry the Microbody targeting signal motif; it reads SML.

It belongs to the FMN-dependent alpha-hydroxy acid dehydrogenase family. Homotetramer. Requires FMN as cofactor.

It is found in the peroxisome. It carries out the reaction a (2S)-2-hydroxycarboxylate + O2 = a 2-oxocarboxylate + H2O2. The catalysed reaction is 2-hydroxydodecanoate + O2 = 2-oxododecanoate + H2O2. It catalyses the reaction 2-hydroxyhexanoate + O2 = 2-oxohexanoate + H2O2. The enzyme catalyses 2-hydroxyoctanoate + O2 = 2-oxooctanoate + H2O2. It carries out the reaction (S)-lactate + O2 = pyruvate + H2O2. It participates in lipid metabolism; fatty acid metabolism. Oxidase that catalyzes the oxidation of a broad range of 2-hydroxyacids to the corresponding 2-oxoacids, with a reduction of O2 to H2O2. Displays the highest activity with the long-chain fatty acid 2-hydroxydodecanoate and has intermediate activity with 2-hydroxyhexanoate, 2-hydroxyoctanote, and the short-chain hydroxyacid (S)-lactate (L-lactate). With much lower activity, it can also use glycolate, leucic acid, valic acid, and isoleucic acid as substrates in vitro. Cannot use 2-hydroxyhexadecanoate or D-lactate as substrates. May be involved in a general medium- and long-chain fatty acid catabolic pathway such as alpha-oxidation. This Arabidopsis thaliana (Mouse-ear cress) protein is Peroxisomal (S)-2-hydroxyacid oxidase GLO4 (GLO4).